Consider the following 1221-residue polypeptide: DNA-directed RNA polymerase subunit beta (1221 aa).

The tract at residues 1176 to 1221 is disordered; the sequence is EKKKLAEEEAEIAAEAEAEGSAEGDAAEADADANEAETADDDKASK. Positions 1183-1215 are enriched in acidic residues; that stretch reads EEAEIAAEAEAEGSAEGDAAEADADANEAETAD.

Belongs to the RNA polymerase beta chain family. In terms of assembly, the RNAP catalytic core consists of 2 alpha, 1 beta, 1 beta' and 1 omega subunit. When a sigma factor is associated with the core the holoenzyme is formed, which can initiate transcription.

It catalyses the reaction RNA(n) + a ribonucleoside 5'-triphosphate = RNA(n+1) + diphosphate. In terms of biological role, DNA-dependent RNA polymerase catalyzes the transcription of DNA into RNA using the four ribonucleoside triphosphates as substrates. The sequence is that of DNA-directed RNA polymerase subunit beta from Lactobacillus delbrueckii subsp. bulgaricus (strain ATCC 11842 / DSM 20081 / BCRC 10696 / JCM 1002 / NBRC 13953 / NCIMB 11778 / NCTC 12712 / WDCM 00102 / Lb 14).